We begin with the raw amino-acid sequence, 293 residues long: 33 kDa chaperonin (293 aa).

Cystine bridges form between Cys-238–Cys-240 and Cys-271–Cys-274.

Belongs to the HSP33 family. In terms of processing, under oxidizing conditions two disulfide bonds are formed involving the reactive cysteines. Under reducing conditions zinc is bound to the reactive cysteines and the protein is inactive.

It localises to the cytoplasm. Redox regulated molecular chaperone. Protects both thermally unfolding and oxidatively damaged proteins from irreversible aggregation. Plays an important role in the bacterial defense system toward oxidative stress. The chain is 33 kDa chaperonin from Staphylococcus aureus (strain Mu3 / ATCC 700698).